The primary structure comprises 371 residues: Carnitine monooxygenase oxygenase subunit (371 aa).

The Rieske domain occupies 44 to 152; the sequence is WICVAHSSEL…VEEYAGFLFI (109 aa). The [2Fe-2S] cluster site is built by Cys-86, His-88, Cys-106, and His-109. Residues His-208, His-213, and Asp-323 each contribute to the Fe cation site.

It belongs to the bacterial ring-hydroxylating dioxygenase alpha subunit family. CntA subfamily. In terms of assembly, composed of an oxygenase subunit (cntA) and a reductase subunit (cntB). Requires [2Fe-2S] cluster as cofactor. Fe cation serves as cofactor.

It carries out the reaction (R)-carnitine + NADH + O2 + H(+) = (3R)-3-hydroxy-4-oxobutanoate + trimethylamine + NAD(+) + H2O. The enzyme catalyses (R)-carnitine + NADPH + O2 + H(+) = (3R)-3-hydroxy-4-oxobutanoate + trimethylamine + NADP(+) + H2O. It functions in the pathway amine and polyamine metabolism; carnitine metabolism. In terms of biological role, converts carnitine to trimethylamine and malic semialdehyde. This chain is Carnitine monooxygenase oxygenase subunit, found in Acinetobacter baumannii (strain ATCC 19606 / DSM 30007 / JCM 6841 / CCUG 19606 / CIP 70.34 / NBRC 109757 / NCIMB 12457 / NCTC 12156 / 81).